Here is a 369-residue protein sequence, read N- to C-terminus: Probable dual-specificity RNA methyltransferase RlmN (369 aa).

The active-site Proton acceptor is Glu108. In terms of domain architecture, Radical SAM core spans 114 to 357; that stretch reads YPDRATVCIS…CTVRDTRGQE (244 aa). A disulfide bridge connects residues Cys121 and Cys362. Positions 128, 132, and 135 each coordinate [4Fe-4S] cluster. S-adenosyl-L-methionine is bound by residues 183–184, Ser217, 240–242, and Asn319; these read GE and SLH. Cys362 (S-methylcysteine intermediate) is an active-site residue.

It belongs to the radical SAM superfamily. RlmN family. [4Fe-4S] cluster serves as cofactor.

Its subcellular location is the cytoplasm. The enzyme catalyses adenosine(2503) in 23S rRNA + 2 reduced [2Fe-2S]-[ferredoxin] + 2 S-adenosyl-L-methionine = 2-methyladenosine(2503) in 23S rRNA + 5'-deoxyadenosine + L-methionine + 2 oxidized [2Fe-2S]-[ferredoxin] + S-adenosyl-L-homocysteine. It catalyses the reaction adenosine(37) in tRNA + 2 reduced [2Fe-2S]-[ferredoxin] + 2 S-adenosyl-L-methionine = 2-methyladenosine(37) in tRNA + 5'-deoxyadenosine + L-methionine + 2 oxidized [2Fe-2S]-[ferredoxin] + S-adenosyl-L-homocysteine. In terms of biological role, specifically methylates position 2 of adenine 2503 in 23S rRNA and position 2 of adenine 37 in tRNAs. In Saccharopolyspora erythraea (strain ATCC 11635 / DSM 40517 / JCM 4748 / NBRC 13426 / NCIMB 8594 / NRRL 2338), this protein is Probable dual-specificity RNA methyltransferase RlmN.